The sequence spans 124 residues: UPF0102 protein PP_1324 (124 aa).

Belongs to the UPF0102 family.

The protein is UPF0102 protein PP_1324 of Pseudomonas putida (strain ATCC 47054 / DSM 6125 / CFBP 8728 / NCIMB 11950 / KT2440).